The following is a 117-amino-acid chain: MHELSIAQSLLALIEDEMAKHGKEKLITVKVRHGRLSSVVPEALSMAFEVMTADSRLAGAALVMEETPVLLRCRDCSREFTPDPPTAAFAPCPGCGQELGHTVVSGRELYIEYLELE.

Ni(2+) is bound at residue His2. 4 residues coordinate Zn(2+): Cys73, Cys76, Cys92, and Cys95.

This sequence belongs to the HypA/HybF family.

Involved in the maturation of [NiFe] hydrogenases. Required for nickel insertion into the metal center of the hydrogenase. The sequence is that of Hydrogenase maturation factor HypA from Solidesulfovibrio magneticus (strain ATCC 700980 / DSM 13731 / RS-1) (Desulfovibrio magneticus).